The sequence spans 754 residues: MSPEPVPPPPPPQCPGCDRAEPIAQRLEEGDEAFRAGDYEMAAELFRSMLAGLAQPDRGLCLRLGDALARAGRLPEALGAFRGAARLGALRPEELEELAGGLVRAVGLRDRPLSAENPGGEPEAPGEGGPAPEPRAPRDLLGCPRCRRLLHKPVTLPCGLTVCKRCVEPGPARPQVRRVNVVLSGLLEKCFPAECRLRRLAGQARSLQRQQQPEAALLRCDQALELAPDDNSLLLLRAELYLTMKNYEQALQDASAACQNEPLLIKGHQVKAQALSGLGRSKEVLKEFLYCLALNPECNSVKKEAQKVMCEVLFSATANVHENLTSSIQSRLKAQGHSHMNAQALLEEGDAGSSENSSEKSDMLGNTNSSVLYFILGLHFEEDKKALESILPTAPSAGLKRQFPDDVEDAPDLNAPGKIPKKDLSLQRSPNSETEESQGLSLDVTDFECALCMRLLFEPVTTPCGHTFCLKCLERCLDHAPHCPLCKDKLSELLASRNFNITVLAEELIFRYLPDELSDRKRIYDEEMSELSNLTRDVPIFVCAMAFPTVPCPLHVFEPRYRLMIRRCMETGTKRFGMCLSAEHAGLSEYGCMLEIKDVRTFPDGSSVVDAIGISRFRVLSHRHRDGYNTADIEYLEDEKVEGPEYEELAALHDSVHQQSVSWFASLQDRMKEQILSHFGVMPDREPEPQSNPSGPAWSWWILAVLPLERKAQLAILGMTSLKERLLAIRRILVIITRKMNSRQELANARERNN.

2 TPR repeats span residues 23–58 (IAQR…QPDR) and 59–91 (GLCL…GALR). Residues 112–136 (PLSAENPGGEPEAPGEGGPAPEPRA) form a disordered region. The segment covering 115-125 (AENPGGEPEAP) has biased composition (low complexity). 3 TPR repeats span residues 197-230 (LRRL…APDD), 231-264 (NSLL…EPLL), and 266-298 (KGHQ…NPEC). The segment at 398–439 (GLKRQFPDDVEDAPDLNAPGKIPKKDLSLQRSPNSETEESQG) is disordered. The span at 426–439 (LQRSPNSETEESQG) shows a compositional bias: polar residues. The stretch at 447–483 (FECALCMRLLFEPVTTPCGHTFCLKCLERCLDHAPHC) is one TPR 6 repeat. Residues 449-487 (CALCMRLLFEPVTTPCGHTFCLKCLERCLDHAPHCPLCK) form an RING-type zinc finger. The region spanning 528–737 (MSELSNLTRD…AIRRILVIIT (210 aa)) is the Lon N-terminal domain.

The sequence is that of LON peptidase N-terminal domain and RING finger protein 2 (LONRF2) from Homo sapiens (Human).